Here is a 317-residue protein sequence, read N- to C-terminus: Ribosomal protein L11 methyltransferase (317 aa).

4 residues coordinate S-adenosyl-L-methionine: Thr-158, Gly-179, Asp-201, and Asn-244.

It belongs to the methyltransferase superfamily. PrmA family.

It is found in the cytoplasm. It catalyses the reaction L-lysyl-[protein] + 3 S-adenosyl-L-methionine = N(6),N(6),N(6)-trimethyl-L-lysyl-[protein] + 3 S-adenosyl-L-homocysteine + 3 H(+). Methylates ribosomal protein L11. The chain is Ribosomal protein L11 methyltransferase from Lactococcus lactis subsp. cremoris (strain SK11).